Here is a 153-residue protein sequence, read N- to C-terminus: MRILEGNLIGQDKKFAIVAGRFNEFIVSKLIGGALDAFKRHGVEEENIDLAWVPGAFEIPLIAKKLAKSGKYAGVVCLGTVIRGATSHYDYVCGEVSKGIANVSLDTEVPVIFGIVTTENIEQAIERAGTKAGNKGFDAAMAAIEMANLLENI.

5-amino-6-(D-ribitylamino)uracil contacts are provided by residues F22, 56 to 58 (AFE), and 80 to 82 (TVI). (2S)-2-hydroxy-3-oxobutyl phosphate is bound at residue 85–86 (AT). H88 (proton donor) is an active-site residue. F113 contributes to the 5-amino-6-(D-ribitylamino)uracil binding site. R127 serves as a coordination point for (2S)-2-hydroxy-3-oxobutyl phosphate.

This sequence belongs to the DMRL synthase family.

It carries out the reaction (2S)-2-hydroxy-3-oxobutyl phosphate + 5-amino-6-(D-ribitylamino)uracil = 6,7-dimethyl-8-(1-D-ribityl)lumazine + phosphate + 2 H2O + H(+). It participates in cofactor biosynthesis; riboflavin biosynthesis; riboflavin from 2-hydroxy-3-oxobutyl phosphate and 5-amino-6-(D-ribitylamino)uracil: step 1/2. Functionally, catalyzes the formation of 6,7-dimethyl-8-ribityllumazine by condensation of 5-amino-6-(D-ribitylamino)uracil with 3,4-dihydroxy-2-butanone 4-phosphate. This is the penultimate step in the biosynthesis of riboflavin. This chain is 6,7-dimethyl-8-ribityllumazine synthase, found in Clostridium perfringens (strain 13 / Type A).